The primary structure comprises 908 residues: Metabotropic glutamate receptor 8 (908 aa).

The signal sequence occupies residues M1–S33. Topologically, residues Q34–W583 are extracellular. A disulfide bridge links C64 with C106. N95 carries N-linked (GlcNAc...) asparagine glycosylation. Residues S156, A177 to T179, and Y227 contribute to the L-glutamate site. 7 disulfide bridges follow: C246/C534, C369/C384, C424/C431, C516/C535, C520/C538, C541/C553, and C556/C569. N298 is a glycosylation site (N-linked (GlcNAc...) asparagine). D309 lines the L-glutamate pocket. K401 is a binding site for L-glutamate. N452 and N480 each carry an N-linked (GlcNAc...) asparagine glycan. N565 is a glycosylation site (N-linked (GlcNAc...) asparagine). Residues A584–Y608 traverse the membrane as a helical segment. Over N609–E620 the chain is Cytoplasmic. Residues L621 to A641 form a helical membrane-spanning segment. Over A642 to I647 the chain is Extracellular. A helical transmembrane segment spans residues C648–T668. Residues K669–Q695 lie on the Cytoplasmic side of the membrane. Residues L696–V716 traverse the membrane as a helical segment. The Extracellular segment spans residues D717 to D746. A helical transmembrane segment spans residues L747 to I768. Topologically, residues K769–K781 are cytoplasmic. Residues P782–G803 form a helical membrane-spanning segment. Residues T804–L818 are Extracellular-facing. Residues T819 to F843 traverse the membrane as a helical segment. At H844–I908 the chain is on the cytoplasmic side. K882 participates in a covalent cross-link: Glycyl lysine isopeptide (Lys-Gly) (interchain with G-Cter in SUMO1).

The protein belongs to the G-protein coupled receptor 3 family. As to quaternary structure, interacts with PICK1. In terms of tissue distribution, strongly expressed in olfactory bulb, accessory olfactory bulb, and mammillary body. Weaker expression in the retina, and in scattered cells in the cortex and hindbrain.

Its subcellular location is the cell membrane. In terms of biological role, G-protein coupled receptor for glutamate. Ligand binding causes a conformation change that triggers signaling via guanine nucleotide-binding proteins (G proteins) and modulates the activity of down-stream effectors. Signaling inhibits adenylate cyclase activity. This is Metabotropic glutamate receptor 8 (Grm8) from Mus musculus (Mouse).